Here is a 190-residue protein sequence, read N- to C-terminus: Protein GrpE (190 aa).

Disordered regions lie at residues M1–I22 and E170–S190. Basic residues predominate over residues A181–S190.

This sequence belongs to the GrpE family. As to quaternary structure, homodimer.

It localises to the cytoplasm. Participates actively in the response to hyperosmotic and heat shock by preventing the aggregation of stress-denatured proteins, in association with DnaK and GrpE. It is the nucleotide exchange factor for DnaK and may function as a thermosensor. Unfolded proteins bind initially to DnaJ; upon interaction with the DnaJ-bound protein, DnaK hydrolyzes its bound ATP, resulting in the formation of a stable complex. GrpE releases ADP from DnaK; ATP binding to DnaK triggers the release of the substrate protein, thus completing the reaction cycle. Several rounds of ATP-dependent interactions between DnaJ, DnaK and GrpE are required for fully efficient folding. The polypeptide is Protein GrpE (Leptospira biflexa serovar Patoc (strain Patoc 1 / Ames)).